The following is a 412-amino-acid chain: Alpha-1-antiproteinase (412 aa).

Residues 1 to 24 form the signal peptide; that stretch reads MTPSISWGLLLLAGLFCLVPSFLA. Ser-33 carries the post-translational modification Phosphoserine. N-linked (GlcNAc...) asparagine glycosylation is found at Asn-100, Asn-133, Asn-264, and Asn-313. The interval 367–386 is RCL; sequence AATVLQAVPMSMPPILNFNK. A Phosphoserine modification is found at Ser-377.

Belongs to the serpin family. As to quaternary structure, interacts with CELA2A. Interacts with ERGIC3 and LMAN1/ERGIC53. Interacts with PRSS1/Trypsin. As to expression, expressed not only in liver but also in kidney tubule cells, where it is regulated by androgens during development.

The protein localises to the secreted. Functionally, inhibitor of serine proteases. Its primary target is elastase, but it also has a moderate affinity for plasmin and thrombin. The polypeptide is Alpha-1-antiproteinase (Serpina1) (Mus caroli (Ryukyu mouse)).